The sequence spans 403 residues: Probable tubulin--tyrosine ligase C12B10.04 (403 aa).

A TTL domain is found at 9-386 (KVYVNYRDEY…PFFESSTKRN (378 aa)).

The protein belongs to the tubulin--tyrosine ligase family. The cofactor is Mg(2+). K(+) is required as a cofactor.

It is found in the cytoplasm. Its subcellular location is the nucleus. It carries out the reaction C-terminal L-alpha-aminoacyl-L-glutamyl-L-glutamyl-[tubulin] + L-tyrosine + ATP = C-terminal L-alpha-aminoacyl-L-glutamyl-L-glutamyl-L-tyrosyl-[tubulin] + ADP + phosphate + H(+). Functionally, probable tubulin--tyrosine ligase. The chain is Probable tubulin--tyrosine ligase C12B10.04 from Schizosaccharomyces pombe (strain 972 / ATCC 24843) (Fission yeast).